The primary structure comprises 402 residues: Advanced glycosylation end product-specific receptor (402 aa).

The first 22 residues, 1–22 (MPTGTVARAWVLVLALWGAVAG), serve as a signal peptide directing secretion. The 87-residue stretch at 23–109 (GQNITARIGE…ATNRLGKEVK (87 aa)) folds into the Ig-like V-type domain. Residues 23–341 (GQNITARIGE…DGSGLGTLAL (319 aa)) lie on the Extracellular side of the membrane. N-linked (GlcNAc...) asparagine glycosylation is found at N25 and N80. 2 disulfide bridges follow: C38/C98 and C143/C206. Ig-like C2-type domains lie at 123–219 (PEIV…RPLN) and 233–315 (PEGI…PPVN). The helical transmembrane segment at 342–362 (ALGILGGLGIAALLIGAILWR) threads the bilayer. Topologically, residues 363–402 (KRQPRLEERKAPESQEDEEERAELNQSEEAEMPENGAGGP) are cytoplasmic. The disordered stretch occupies residues 368 to 402 (LEERKAPESQEDEEERAELNQSEEAEMPENGAGGP). Phosphoserine occurs at positions 376 and 389. Residues 376–394 (SQEDEEERAELNQSEEAEM) show a composition bias toward acidic residues.

Constitutive homodimer; disulfide-linked. Forms homooligomers. Interacts with S100A1 and APP. Interacts with S100B, S100A12 and S100A14. Interacts with TIRAP. Interacts with HMGB1. Interacts with LGP2; this interaction plays an important role in AGER-mediated pro-inflammatory responses and cytokine release. Interacts with double-strand break repair protein MRE11 which is a core component of the MRN complex; the interaction enhances MRE11 endonuclease activity and promotes DNA repair. Interacts with the MCM2-7 complex via interaction with complex member MCM2; the interaction is increased following DNA replication stress and stabilizes the MCM2-7 complex at replication forks. Phosphorylated on its cytoplasmic domain by PKCzeta/PRKCZ upon ligand binding. Phosphorylated by ATM following DNA damage. Post-translationally, targeted by the ubiquitin E3 ligase subunit FBXO10 to mediate its ubiquitination and degradation. In terms of tissue distribution, endothelial cells and cardiomyocytes. Expressed in brain.

The protein resides in the cell membrane. It localises to the cell projection. Its subcellular location is the phagocytic cup. It is found in the early endosome. The protein localises to the nucleus. Functionally, cell surface pattern recognition receptor that senses endogenous stress signals with a broad ligand repertoire including advanced glycation end products, S100 proteins, high-mobility group box 1 protein/HMGB1, amyloid beta/APP oligomers, nucleic acids, histones, phospholipids and glycosaminoglycans. Advanced glycosylation end products are nonenzymatically glycosylated proteins which accumulate in vascular tissue in aging and at an accelerated rate in diabetes. These ligands accumulate at inflammatory sites during the pathogenesis of various diseases including diabetes, vascular complications, neurodegenerative disorders and cancers, and RAGE transduces their binding into pro-inflammatory responses. Upon ligand binding, uses TIRAP and MYD88 as adapters to transduce the signal ultimately leading to the induction of inflammatory cytokines IL6, IL8 and TNFalpha through activation of NF-kappa-B. Interaction with S100A12 on endothelium, mononuclear phagocytes, and lymphocytes triggers cellular activation, with generation of key pro-inflammatory mediators. Interaction with S100B after myocardial infarction may play a role in myocyte apoptosis by activating ERK1/2 and p53/TP53 signaling. Contributes to the translocation of amyloid-beta peptide (ABPP) across the cell membrane from the extracellular to the intracellular space in cortical neurons. ABPP-initiated RAGE signaling, especially stimulation of p38 mitogen-activated protein kinase (MAPK), has the capacity to drive a transport system delivering ABPP as a complex with RAGE to the intraneuronal space. Participates in endothelial albumin transcytosis together with HMGB1 through the RAGE/SRC/Caveolin-1 pathway, leading to endothelial hyperpermeability. Mediates the loading of HMGB1 in extracellular vesicles (EVs) that shuttle HMGB1 to hepatocytes by transferrin-mediated endocytosis and subsequently promote hepatocyte pyroptosis by activating the NLRP3 inflammasome. Binds to DNA and promotes extracellular hypomethylated DNA (CpG DNA) uptake by cells via the endosomal route to activate inflammatory responses. Mediates phagocytosis by non-professional phagocytes (NPP) and this is enhanced by binding to ligands including RNA, DNA, HMGB1 and histones. Promotes NPP-mediated phagocytosis of Saccharomyces cerevisiae spores by binding to RNA attached to the spore wall. Also promotes NPP-mediated phagocytosis of apoptotic cells. Following DNA damage, recruited to DNA double-strand break sites where it colocalizes with the MRN repair complex via interaction with double-strand break repair protein MRE11. Enhances the endonuclease activity of MRE11, promoting the end resection of damaged DNA. Promotes DNA damage repair in trophoblasts which enhances trophoblast invasion and contributes to placental development and maintenance. Protects cells from DNA replication stress by localizing to damaged replication forks where it stabilizes the MCM2-7 complex and promotes faithful progression of the replication fork. This Rattus norvegicus (Rat) protein is Advanced glycosylation end product-specific receptor (Ager).